A 425-amino-acid chain; its full sequence is D-tagatose 6-phosphate 4-epimerase (425 aa).

It belongs to the GatZ/KbaZ family.

The enzyme catalyses keto-D-tagatose 6-phosphate = keto-D-fructose 6-phosphate. Its pathway is carbohydrate metabolism. Functionally, involved in galactitol and D-altritol catabolism. Catalyzes the epimerization of D-tagatose 6-phosphate to D-fructose 6-phosphate. This is D-tagatose 6-phosphate 4-epimerase from Agrobacterium fabrum (strain C58 / ATCC 33970) (Agrobacterium tumefaciens (strain C58)).